The following is a 396-amino-acid chain: E3 ubiquitin-protein transferase MAEA (396 aa).

Residues M1–R124 are extracellular and involved in cell to cell contact. T28 bears the Phosphothreonine mark. Residues K121–D153 enclose the LisH domain. The CTLH domain maps to M159 to D216. The RING-Gid-type zinc finger occupies C314–T381.

In terms of assembly, identified in the CTLH complex that contains GID4, RANBP9 and/or RANBP10, MKLN1, MAEA, RMND5A (or alternatively its paralog RMND5B), GID8, ARMC8, WDR26 and YPEL5. Within this complex, MAEA, RMND5A (or alternatively its paralog RMND5B), GID8, WDR26, and RANBP9 and/or RANBP10 form the catalytic core, while GID4, MKLN1, ARMC8 and YPEL5 have ancillary roles. Interacts with F-actin. Autoubiquitinated as component of the CTLH E3 ubiquitin-protein ligase complex (in vitro). In terms of tissue distribution, detected in embryonic fibroblasts. Detected in macrophages. Detected in heart. liver, spleen and kidney (at protein level).

It is found in the cytoplasm. Its subcellular location is the nucleus. The protein localises to the nucleoplasm. The protein resides in the nucleus matrix. It localises to the cell membrane. It is found in the cytoskeleton. It catalyses the reaction S-ubiquitinyl-[E2 ubiquitin-conjugating enzyme]-L-cysteine + [acceptor protein]-L-lysine = [E2 ubiquitin-conjugating enzyme]-L-cysteine + N(6)-ubiquitinyl-[acceptor protein]-L-lysine.. Its function is as follows. Core component of the CTLH E3 ubiquitin-protein ligase complex that selectively accepts ubiquitin from UBE2H and mediates ubiquitination and subsequent proteasomal degradation of the transcription factor HBP1. MAEA and RMND5A are both required for catalytic activity of the CTLH E3 ubiquitin-protein ligase complex. MAEA is required for normal cell proliferation. The CTLH E3 ubiquitin-protein ligase complex is not required for the degradation of enzymes involved in gluconeogenesis, such as FBP1. Plays a role in erythroblast enucleation during erythrocyte maturation and in the development of mature macrophages. Mediates the attachment of erythroid cell to mature macrophages; this MAEA-mediated contact inhibits erythroid cell apoptosis. Participates in erythroblastic island formation, which is the functional unit of definitive erythropoiesis. Associates with F-actin to regulate actin distribution in erythroblasts and macrophages. May contribute to nuclear architecture and cells division events. This Mus musculus (Mouse) protein is E3 ubiquitin-protein transferase MAEA (Maea).